Reading from the N-terminus, the 313-residue chain is ADP,ATP carrier protein (313 aa).

3 Solcar repeats span residues 11-104, 116-208, and 216-302; these read PPFV…FKKM, KWMA…IKPV, and NNFL…LQVL. A run of 5 helical transmembrane segments spans residues 13 to 40, 81 to 105, 114 to 134, 184 to 205, and 219 to 239; these read FVAD…IKLL, TANV…KKMF, YWKW…TSLL, FGPS…YDSI, and LASF…SYPL. The ADP site is built by Arg-86 and Arg-98. Arg-243 lines the ADP pocket. Residues 243 to 248 are important for transport activity; the sequence is RRRMMM. A Nucleotide carrier signature motif motif is present at residues 243-248; it reads RRRMMM. A helical transmembrane segment spans residues 279–299; the sequence is AGANILRGVAGAGVLSIYDQL.

This sequence belongs to the mitochondrial carrier (TC 2.A.29) family. In terms of assembly, monomer.

It localises to the mitochondrion inner membrane. The catalysed reaction is ADP(in) + ATP(out) = ADP(out) + ATP(in). The matrix-open state (m-state) is inhibited by the membrane-permeable bongkrekic acid (BKA). The cytoplasmic-open state (c-state) is inhibited by the membrane-impermeable toxic inhibitor carboxyatractyloside (CATR). Its function is as follows. ADP:ATP antiporter that mediates import of ADP into the mitochondrial matrix for ATP synthesis, and export of ATP out to fuel the cell. Cycles between the cytoplasmic-open state (c-state) and the matrix-open state (m-state): operates by the alternating access mechanism with a single substrate-binding site intermittently exposed to either the cytosolic (c-state) or matrix (m-state) side of the inner mitochondrial membrane. The protein is ADP,ATP carrier protein (aac) of Neurospora crassa (strain ATCC 24698 / 74-OR23-1A / CBS 708.71 / DSM 1257 / FGSC 987).